We begin with the raw amino-acid sequence, 126 residues long: Fluoride-specific ion channel FluC (126 aa).

4 helical membrane passes run 3–23 (LSILAVGIGGALGSLFRWFLG), 35–55 (LGTLASNVIAGYIIGAAVAYF), 68–88 (FIITGLMGGLSTFSTFSAEVV), and 103–123 (IAIHVTASVIATVLGITTVAV). 2 residues coordinate Na(+): Gly-75 and Ser-78.

The protein belongs to the fluoride channel Fluc/FEX (TC 1.A.43) family.

Its subcellular location is the cell inner membrane. It catalyses the reaction fluoride(in) = fluoride(out). Na(+) is not transported, but it plays an essential structural role and its presence is essential for fluoride channel function. In terms of biological role, fluoride-specific ion channel. Important for reducing fluoride concentration in the cell, thus reducing its toxicity. The sequence is that of Fluoride-specific ion channel FluC from Paraburkholderia phymatum (strain DSM 17167 / CIP 108236 / LMG 21445 / STM815) (Burkholderia phymatum).